The primary structure comprises 767 residues: 5-methyltetrahydropteroyltriglutamate--homocysteine methyltransferase (767 aa).

5-methyltetrahydropteroyltri-L-glutamate contacts are provided by residues 16–19 (RELK) and K122. L-homocysteine-binding positions include 443–445 (IGS) and E496. L-methionine is bound by residues 443–445 (IGS) and E496. 5-methyltetrahydropteroyltri-L-glutamate is bound by residues 527-528 (RC) and W573. D611 contributes to the L-homocysteine binding site. D611 is a binding site for L-methionine. E617 contributes to the 5-methyltetrahydropteroyltri-L-glutamate binding site. Zn(2+) is bound by residues H653, C655, and E677. H706 acts as the Proton donor in catalysis. C738 contributes to the Zn(2+) binding site.

The protein belongs to the vitamin-B12 independent methionine synthase family. Requires Zn(2+) as cofactor.

The enzyme catalyses 5-methyltetrahydropteroyltri-L-glutamate + L-homocysteine = tetrahydropteroyltri-L-glutamate + L-methionine. It functions in the pathway amino-acid biosynthesis; L-methionine biosynthesis via de novo pathway; L-methionine from L-homocysteine (MetE route): step 1/1. In terms of biological role, catalyzes the transfer of a methyl group from 5-methyltetrahydrofolate to homocysteine resulting in methionine formation. This is 5-methyltetrahydropteroyltriglutamate--homocysteine methyltransferase from Ectopseudomonas mendocina (strain ymp) (Pseudomonas mendocina).